Here is a 480-residue protein sequence, read N- to C-terminus: Glutamate--tRNA ligase (480 aa).

The 'HIGH' region motif lies at 21-31 (PSPTGYLHVGG). Residues Cys110, Cys112, Cys137, and His139 each coordinate Zn(2+). The short motif at 248-252 (KLSKR) is the 'KMSKS' region element. Lys251 contacts ATP.

This sequence belongs to the class-I aminoacyl-tRNA synthetase family. Glutamate--tRNA ligase type 1 subfamily. In terms of assembly, monomer. The cofactor is Zn(2+).

The protein localises to the cytoplasm. The enzyme catalyses tRNA(Glu) + L-glutamate + ATP = L-glutamyl-tRNA(Glu) + AMP + diphosphate. Its function is as follows. Catalyzes the attachment of glutamate to tRNA(Glu) in a two-step reaction: glutamate is first activated by ATP to form Glu-AMP and then transferred to the acceptor end of tRNA(Glu). The polypeptide is Glutamate--tRNA ligase (Haemophilus influenzae (strain PittEE)).